Consider the following 244-residue polypeptide: 5-oxoprolinase subunit A (244 aa).

The protein belongs to the LamB/PxpA family. As to quaternary structure, forms a complex composed of PxpA, PxpB and PxpC.

The enzyme catalyses 5-oxo-L-proline + ATP + 2 H2O = L-glutamate + ADP + phosphate + H(+). Its function is as follows. Catalyzes the cleavage of 5-oxoproline to form L-glutamate coupled to the hydrolysis of ATP to ADP and inorganic phosphate. The sequence is that of 5-oxoprolinase subunit A from Escherichia coli O6:K15:H31 (strain 536 / UPEC).